A 1118-amino-acid polypeptide reads, in one-letter code: Phytochrome 1 (1118 aa).

The segment covering Met1–Ser10 has biased composition (low complexity). The interval Met1 to Ala23 is disordered. A GAF domain is found at Asp212–Val391. Cys317 is a binding site for phytochromobilin. PAS domains are found at residues Val606–Glu677 and Asp740–Met811. Positions Tyr887–His1110 constitute a Histidine kinase domain.

It belongs to the phytochrome family. Homodimer. In terms of processing, contains one covalently linked phytochromobilin chromophore.

Regulatory photoreceptor which exists in two forms that are reversibly interconvertible by light: the Pr form that absorbs maximally in the red region of the spectrum and the Pfr form that absorbs maximally in the far-red region. Photoconversion of Pr to Pfr induces an array of morphogenic responses, whereas reconversion of Pfr to Pr cancels the induction of those responses. Pfr controls the expression of a number of nuclear genes including those encoding the small subunit of ribulose-bisphosphate carboxylase, chlorophyll A/B binding protein, protochlorophyllide reductase, rRNA, etc. It also controls the expression of its own gene(s) in a negative feedback fashion. This Adiantum capillus-veneris (Maidenhair fern) protein is Phytochrome 1 (PHY1).